Here is a 262-residue protein sequence, read N- to C-terminus: Sperm microtubule inner protein 6 (262 aa).

The protein belongs to the SPMIP6 family. In terms of assembly, microtubule inner protein component of sperm flagellar doublet microtubules. Interacts with alpha-tubulin. In terms of tissue distribution, expressed in testis. Strongly expressed in ciliated epithelial cells with lower levels in goblet cells (at protein level).

It is found in the cytoplasm. Its subcellular location is the cytoskeleton. The protein resides in the nucleus. It localises to the mitochondrion. The protein localises to the flagellum axoneme. Functionally, may participate in intramanchette transport and midpiece formation of the sperm tail. May play a potential role in somatic cell proliferation. This Homo sapiens (Human) protein is Sperm microtubule inner protein 6.